Reading from the N-terminus, the 489-residue chain is Mitochondrial-processing peptidase subunit beta (489 aa).

Residues 1 to 45 constitute a mitochondrion transit peptide; sequence MAAAAARVVLLPAARRRLWGFSESLLIRGAAGRSSYFGENRLRST. H101 contributes to the Zn(2+) binding site. E104 (proton acceptor) is an active-site residue. H105 and E181 together coordinate Zn(2+).

Belongs to the peptidase M16 family. In terms of assembly, heterodimer of PMPCA (alpha) and PMPCB (beta) subunits, forming the mitochondrial processing protease (MPP) in which PMPCA is involved in substrate recognition and binding and PMPCB is the catalytic subunit. It depends on Zn(2+) as a cofactor.

It is found in the mitochondrion matrix. It catalyses the reaction Release of N-terminal transit peptides from precursor proteins imported into the mitochondrion, typically with Arg in position P2.. Its activity is regulated as follows. Binding to PMPCA is required for catalytic activity. Catalytic subunit of the essential mitochondrial processing protease (MPP), which cleaves the mitochondrial sequence off newly imported precursors proteins. Preferentially, cleaves after an arginine at position P2. Required for PINK1 turnover by coupling PINK1 mitochondrial import and cleavage, which results in subsequent PINK1 proteolysis. The polypeptide is Mitochondrial-processing peptidase subunit beta (PMPCB) (Pongo abelii (Sumatran orangutan)).